Consider the following 173-residue polypeptide: Alpha-crystallin A chain (173 aa).

Met-1 is subject to N-acetylmethionine. A required for complex formation with BFSP1 and BFSP2 region spans residues 1-63; it reads MDIAIQHPWF…RTVLDSGISE (63 aa). Gln-6 is subject to Deamidated glutamine; partial. Ser-45 carries the post-translational modification Phosphoserine. Gln-50 carries the post-translational modification Deamidated glutamine; partial. In terms of domain architecture, sHSP spans 52–162; the sequence is LFRTVLDSGI…GHSERAIPVS (111 aa). N6-acetyllysine is present on Lys-70. Gln-90 is subject to Deamidated glutamine; partial. Lys-99 carries the post-translational modification N6-acetyllysine. His-100 serves as a coordination point for Zn(2+). Position 101 is a deamidated asparagine; partial (Asn-101). Glu-102 and His-107 together coordinate Zn(2+). Phosphoserine is present on Ser-122. Asn-123 bears the Deamidated asparagine; partial mark. Positions 144 to 173 are disordered; it reads PKVPSGLDAGHSERAIPVSREEKPSSAPSS. Positions 153-167 are enriched in basic and acidic residues; sequence GHSERAIPVSREEKP. His-154 lines the Zn(2+) pocket. An O-linked (GlcNAc) serine glycan is attached at Ser-162.

Belongs to the small heat shock protein (HSP20) family. As to quaternary structure, heteromer composed of three CRYAA and one CRYAB subunits. Inter-subunit bridging via zinc ions enhances stability, which is crucial as there is no protein turn over in the lens. Can also form homodimers and homotetramers (dimers of dimers) which serve as the building blocks of homooligomers. Within homooligomers, the zinc-binding motif is created from residues of 3 different molecules. His-100 and Glu-102 from one molecule are ligands of the zinc ion, and His-107 and His-154 residues from additional molecules complete the site with tetrahedral coordination geometry. Part of a complex required for lens intermediate filament formation composed of BFSP1, BFSP2 and CRYAA. Post-translationally, acetylation at Lys-70 may increase chaperone activity. In terms of processing, undergoes age-dependent proteolytical cleavage at the C-terminus.

It localises to the cytoplasm. The protein localises to the nucleus. Its function is as follows. Contributes to the transparency and refractive index of the lens. Acts as a chaperone, preventing aggregation of various proteins under a wide range of stress conditions. Required for the correct formation of lens intermediate filaments as part of a complex composed of BFSP1, BFSP2 and CRYAA. This is Alpha-crystallin A chain (CRYAA) from Tapirus indicus (Asiatic tapir).